A 1032-amino-acid chain; its full sequence is Probable ATP-dependent RNA helicase DDX46 (1032 aa).

A compositionally biased stretch (basic residues) spans 1-24 (MGRESRHYRKRSASRGRSGSRSRS). Residues 1 to 227 (MGRESRHYRK…TEMEDEELDP (227 aa)) form a disordered region. Residue Gly2 is the site of N-myristoyl glycine attachment. The segment covering 26-49 (SPSDKRSKRGDDRRSRSRDRDRRR) has biased composition (basic and acidic residues). Composition is skewed to basic residues over residues 50-73 (ERSR…RSRS) and 81-103 (ERRR…RRSR). The segment covering 112 to 200 (KKTENRSRSK…EMKQGKKWSL (89 aa)) has biased composition (basic and acidic residues). The stretch at 152–197 (DQNKLEEEMRKRKERVEKWREEQRKKAMENIGELKKEIEEMKQGKK) forms a coiled coil. A Glycyl lysine isopeptide (Lys-Gly) (interchain with G-Cter in SUMO2) cross-link involves residue Lys186. Position 199 is a phosphoserine (Ser199). Positions 201-211 (EDDDDDEDDPA) are enriched in acidic residues. At Lys263 the chain carries N6-acetyllysine. A Phosphotyrosine modification is found at Tyr294. Phosphoserine occurs at positions 295 and 296. A Glycyl lysine isopeptide (Lys-Gly) (interchain with G-Cter in SUMO2) cross-link involves residue Lys325. Ser346 is modified (phosphoserine). The Q motif motif lies at 372–400 (KSWVQCGISMKILNSLKKHGYEKPTPIQT). The Helicase ATP-binding domain occupies 403–581 (IPAIMSGRDL…RRILSKPIEV (179 aa)). Position 416–423 (416–423 (AKTGSGKT)) interacts with ATP. The short motif at 529–532 (DEAD) is the DEAD box element. One can recognise a Helicase C-terminal domain in the interval 592 to 753 (DVEQQVIVIE…AVPPDLEKLW (162 aa)). Lys776 is subject to N6-acetyllysine. Lys779 participates in a covalent cross-link: Glycyl lysine isopeptide (Lys-Gly) (interchain with G-Cter in SUMO2). Ser804 carries the phosphoserine modification. Lys904 is subject to N6-acetyllysine. Residues Lys908 and Lys916 each participate in a glycyl lysine isopeptide (Lys-Gly) (interchain with G-Cter in SUMO2) cross-link. Position 929 is a phosphoserine (Ser929).

The protein belongs to the DEAD box helicase family. DDX46/PRP5 subfamily. Component of the 17S U2 SnRNP complex, a ribonucleoprotein complex that contains small nuclear RNA (snRNA) U2 and a number of specific proteins. Within the 17S U2 SnRNP complex, DDX46 is part of the SF3B subcomplex, which is required for 'A' complex assembly formed by the stable binding of U2 snRNP to the branchpoint sequence in pre-mRNA. Recruited to the 17S U2 SnRNP complex following release of DDX42; DDX42 and DDX46 bind the SF3B subcomplex in a competitive manner.

The protein localises to the nucleus speckle. It is found in the nucleus. Its subcellular location is the cajal body. The catalysed reaction is ATP + H2O = ADP + phosphate + H(+). Functionally, component of the 17S U2 SnRNP complex of the spliceosome, a large ribonucleoprotein complex that removes introns from transcribed pre-mRNAs. The 17S U2 SnRNP complex (1) directly participates in early spliceosome assembly and (2) mediates recognition of the intron branch site during pre-mRNA splicing by promoting the selection of the pre-mRNA branch-site adenosine, the nucleophile for the first step of splicing. Within the 17S U2 SnRNP complex, DDX46 plays essential roles during assembly of pre-spliceosome and proofreading of the branch site. The chain is Probable ATP-dependent RNA helicase DDX46 (Ddx46) from Mus musculus (Mouse).